The primary structure comprises 109 residues: Sulredoxin (109 aa).

A Rieske domain is found at 3 to 107 (WKRTISAKAL…IRDNNGWIEV (105 aa)). Residues cysteine 43, histidine 45, cysteine 62, and histidine 65 each coordinate [2Fe-2S] cluster.

Homooligomeric. The cofactor is [2Fe-2S] cluster.

The protein resides in the cytoplasm. In terms of biological role, not yet known. In Sulfurisphaera tokodaii (strain DSM 16993 / JCM 10545 / NBRC 100140 / 7) (Sulfolobus tokodaii), this protein is Sulredoxin (sdx).